The chain runs to 283 residues: Pantoate--beta-alanine ligase (283 aa).

This sequence belongs to the pantothenate synthetase family.

The catalysed reaction is (R)-pantoate + beta-alanine + ATP = (R)-pantothenate + AMP + diphosphate + H(+). The protein operates within cofactor biosynthesis; (R)-pantothenate biosynthesis; (R)-pantothenate from (R)-pantoate and beta-alanine: step 1/1. The sequence is that of Pantoate--beta-alanine ligase (pan6) from Schizosaccharomyces pombe (strain 972 / ATCC 24843) (Fission yeast).